We begin with the raw amino-acid sequence, 63 residues long: DNA gyrase inhibitor YacG (63 aa).

The Zn(2+) site is built by Cys-9, Cys-12, Cys-28, and Cys-32.

Belongs to the DNA gyrase inhibitor YacG family. Interacts with GyrB. Zn(2+) is required as a cofactor.

Inhibits all the catalytic activities of DNA gyrase by preventing its interaction with DNA. Acts by binding directly to the C-terminal domain of GyrB, which probably disrupts DNA binding by the gyrase. The sequence is that of DNA gyrase inhibitor YacG from Salmonella arizonae (strain ATCC BAA-731 / CDC346-86 / RSK2980).